The following is a 426-amino-acid chain: Trigger factor (426 aa).

One can recognise a PPIase FKBP-type domain in the interval 166 to 249 (GDIVTFDFKG…IIEVKARELP (84 aa)).

The protein belongs to the FKBP-type PPIase family. Tig subfamily.

It is found in the cytoplasm. The catalysed reaction is [protein]-peptidylproline (omega=180) = [protein]-peptidylproline (omega=0). In terms of biological role, involved in protein export. Acts as a chaperone by maintaining the newly synthesized protein in an open conformation. Functions as a peptidyl-prolyl cis-trans isomerase. The sequence is that of Trigger factor from Mesoplasma florum (strain ATCC 33453 / NBRC 100688 / NCTC 11704 / L1) (Acholeplasma florum).